The chain runs to 229 residues: Thiamine-phosphate synthase (229 aa).

Residues 38 to 42 (QFREK) and Asn73 each bind 4-amino-2-methyl-5-(diphosphooxymethyl)pyrimidine. Residues Asp74 and Asp93 each contribute to the Mg(2+) site. 4-amino-2-methyl-5-(diphosphooxymethyl)pyrimidine is bound at residue Ser111. 137–139 (TLS) contributes to the 2-[(2R,5Z)-2-carboxy-4-methylthiazol-5(2H)-ylidene]ethyl phosphate binding site. Position 140 (Lys140) interacts with 4-amino-2-methyl-5-(diphosphooxymethyl)pyrimidine. 2-[(2R,5Z)-2-carboxy-4-methylthiazol-5(2H)-ylidene]ethyl phosphate-binding positions include Gly169 and 189–190 (IS).

Belongs to the thiamine-phosphate synthase family. Mg(2+) serves as cofactor.

The enzyme catalyses 2-[(2R,5Z)-2-carboxy-4-methylthiazol-5(2H)-ylidene]ethyl phosphate + 4-amino-2-methyl-5-(diphosphooxymethyl)pyrimidine + 2 H(+) = thiamine phosphate + CO2 + diphosphate. It carries out the reaction 2-(2-carboxy-4-methylthiazol-5-yl)ethyl phosphate + 4-amino-2-methyl-5-(diphosphooxymethyl)pyrimidine + 2 H(+) = thiamine phosphate + CO2 + diphosphate. It catalyses the reaction 4-methyl-5-(2-phosphooxyethyl)-thiazole + 4-amino-2-methyl-5-(diphosphooxymethyl)pyrimidine + H(+) = thiamine phosphate + diphosphate. The protein operates within cofactor biosynthesis; thiamine diphosphate biosynthesis; thiamine phosphate from 4-amino-2-methyl-5-diphosphomethylpyrimidine and 4-methyl-5-(2-phosphoethyl)-thiazole: step 1/1. Functionally, condenses 4-methyl-5-(beta-hydroxyethyl)thiazole monophosphate (THZ-P) and 2-methyl-4-amino-5-hydroxymethyl pyrimidine pyrophosphate (HMP-PP) to form thiamine monophosphate (TMP). The chain is Thiamine-phosphate synthase from Streptococcus suis (strain 98HAH33).